A 573-amino-acid chain; its full sequence is Protein phosphatase EYA3 (573 aa).

Position 1 is an N-acetylmethionine (methionine 1). 2 disordered regions span residues 1-46 and 236-296; these read MEEE…LASN and TYQS…DATS. Residues 20 to 46 show a composition bias toward polar residues; it reads SGEQTISQVSNPDVSDQKPETSSLASN. Residues 254–271 are compositionally biased toward low complexity; it reads LSSGDPSTSPSLSQTTPS. Serine 262 and serine 266 each carry phosphoserine. The Nucleophile role is filled by aspartate 309. Mg(2+) is bound by residues aspartate 309 and aspartate 311. The active-site Proton donor is aspartate 311. Phosphoserine is present on residues serine 438 and serine 472. Aspartate 537 contacts Mg(2+).

The protein belongs to the HAD-like hydrolase superfamily. EYA family. In terms of assembly, interacts with SIX1 and DACH1, and probably SIX2, SIX4, SIX5. Mg(2+) is required as a cofactor. In terms of processing, ser-266 phosphorylation is required for localization at sites of DNA damage and directing interaction with H2AX.

The protein localises to the cytoplasm. The protein resides in the nucleus. The catalysed reaction is O-phospho-L-tyrosyl-[protein] + H2O = L-tyrosyl-[protein] + phosphate. In terms of biological role, tyrosine phosphatase that specifically dephosphorylates 'Tyr-142' of histone H2AX (H2AXY142ph). 'Tyr-142' phosphorylation of histone H2AX plays a central role in DNA repair and acts as a mark that distinguishes between apoptotic and repair responses to genotoxic stress. Promotes efficient DNA repair by dephosphorylating H2AX, promoting the recruitment of DNA repair complexes containing MDC1. Its function as histone phosphatase probably explains its role in transcription regulation during organogenesis. Coactivates SIX1, and seems to coactivate SIX2, SIX4 and SIX5. The repression of precursor cell proliferation in myoblasts by SIX1 is switched to activation through recruitment of EYA3 to the SIX1-DACH1 complex and seems to be dependent on EYA3 phosphatase activity. May be involved in development of the eye. The protein is Protein phosphatase EYA3 (EYA3) of Homo sapiens (Human).